A 158-amino-acid chain; its full sequence is 2-C-methyl-D-erythritol 2,4-cyclodiphosphate synthase (158 aa).

2 residues coordinate a divalent metal cation: Asp9 and His11. 4-CDP-2-C-methyl-D-erythritol 2-phosphate is bound by residues 9–11 (DVH) and 35–36 (HS). Residue His43 coordinates a divalent metal cation. Residues 57–59 (DIG), 62–66 (FPDTD), 101–107 (AQKPKMA), 133–136 (TTTE), Phe140, and Arg143 contribute to the 4-CDP-2-C-methyl-D-erythritol 2-phosphate site.

The protein belongs to the IspF family. Homotrimer. Requires a divalent metal cation as cofactor.

It carries out the reaction 4-CDP-2-C-methyl-D-erythritol 2-phosphate = 2-C-methyl-D-erythritol 2,4-cyclic diphosphate + CMP. The protein operates within isoprenoid biosynthesis; isopentenyl diphosphate biosynthesis via DXP pathway; isopentenyl diphosphate from 1-deoxy-D-xylulose 5-phosphate: step 4/6. Functionally, involved in the biosynthesis of isopentenyl diphosphate (IPP) and dimethylallyl diphosphate (DMAPP), two major building blocks of isoprenoid compounds. Catalyzes the conversion of 4-diphosphocytidyl-2-C-methyl-D-erythritol 2-phosphate (CDP-ME2P) to 2-C-methyl-D-erythritol 2,4-cyclodiphosphate (ME-CPP) with a corresponding release of cytidine 5-monophosphate (CMP). This Bacillus thuringiensis subsp. konkukian (strain 97-27) protein is 2-C-methyl-D-erythritol 2,4-cyclodiphosphate synthase.